A 628-amino-acid chain; its full sequence is tRNA uridine 5-carboxymethylaminomethyl modification enzyme MnmG (628 aa).

FAD is bound by residues 14–19 (GAGHAG), Val-126, and Ser-181. NAD(+) is bound at residue 273–287 (GPRYCPSIEDKVVRF). FAD is bound at residue Gln-370.

The protein belongs to the MnmG family. In terms of assembly, homodimer. Heterotetramer of two MnmE and two MnmG subunits. It depends on FAD as a cofactor.

The protein resides in the cytoplasm. Its function is as follows. NAD-binding protein involved in the addition of a carboxymethylaminomethyl (cmnm) group at the wobble position (U34) of certain tRNAs, forming tRNA-cmnm(5)s(2)U34. The chain is tRNA uridine 5-carboxymethylaminomethyl modification enzyme MnmG from Bacillus licheniformis (strain ATCC 14580 / DSM 13 / JCM 2505 / CCUG 7422 / NBRC 12200 / NCIMB 9375 / NCTC 10341 / NRRL NRS-1264 / Gibson 46).